A 247-amino-acid polypeptide reads, in one-letter code: MRNVELETVLNNQLNIGAFQDYAPNGLQVEGRRDIQRVVTGVTASQALLDAAVAHQADAILVHHGYFWKNEPVVVRGMKRNRLKTLLTHDINLYGYHLPLDAHPELGNNAQLAKLLEIQVLGEIESLLPYGEFTTPLNAVALRERLEKQLGRSVLHCGDRAPAEVRRIAWCTGGGQGYIQQAAEFGVDAFITGEVSEQTIHIAREMKVNFYAAGHHATERYGIKALGEWLAEQYQLDVTFIDIPNPA.

A divalent metal cation is bound by residues H63, H64, D101, H215, and E219.

This sequence belongs to the GTP cyclohydrolase I type 2/NIF3 family. Homohexamer.

This is GTP cyclohydrolase 1 type 2 homolog from Yersinia pestis.